Here is a 408-residue protein sequence, read N- to C-terminus: Chaperonin GroEL (408 aa).

ATP is bound by residues threonine 30–proline 33, lysine 51, and aspartate 87–threonine 91.

The protein belongs to the chaperonin (HSP60) family. Forms a cylinder of 14 subunits composed of two heptameric rings stacked back-to-back. Interacts with the co-chaperonin GroES.

The protein resides in the cytoplasm. The catalysed reaction is ATP + H2O + a folded polypeptide = ADP + phosphate + an unfolded polypeptide.. Together with its co-chaperonin GroES, plays an essential role in assisting protein folding. The GroEL-GroES system forms a nano-cage that allows encapsulation of the non-native substrate proteins and provides a physical environment optimized to promote and accelerate protein folding. The polypeptide is Chaperonin GroEL (Rickettsia rickettsii).